The sequence spans 152 residues: Early glycoprotein GP48 (152 aa).

The signal sequence occupies residues Met1–Gly25. Asn48, Asn53, Asn61, Asn69, Asn108, Asn112, Asn122, Asn139, and Asn148 each carry an N-linked (GlcNAc...) asparagine; by host glycan.

Belongs to the RL11 family. Post-translationally, N-glycosylated and possibly O-glycosylated.

The protein resides in the virion membrane. The sequence is that of Early glycoprotein GP48 (UL4) from Homo sapiens (Human).